Here is a 486-residue protein sequence, read N- to C-terminus: Kynureninase 1 (486 aa).

Positions 53-72 (DLKRTTLDPNQEPEHSPTPS) are disordered. Residues Leu146, Thr147, 174 to 177 (FPSD), Ser231, Asp260, His263, and Tyr285 each bind pyridoxal 5'-phosphate. Lys286 is modified (N6-(pyridoxal phosphate)lysine). Pyridoxal 5'-phosphate contacts are provided by Trp326 and Asn354.

This sequence belongs to the kynureninase family. As to quaternary structure, homodimer. The cofactor is pyridoxal 5'-phosphate.

It localises to the cytoplasm. It carries out the reaction L-kynurenine + H2O = anthranilate + L-alanine + H(+). It catalyses the reaction 3-hydroxy-L-kynurenine + H2O = 3-hydroxyanthranilate + L-alanine + H(+). The protein operates within amino-acid degradation; L-kynurenine degradation; L-alanine and anthranilate from L-kynurenine: step 1/1. It participates in cofactor biosynthesis; NAD(+) biosynthesis; quinolinate from L-kynurenine: step 2/3. In terms of biological role, catalyzes the cleavage of L-kynurenine (L-Kyn) and L-3-hydroxykynurenine (L-3OHKyn) into anthranilic acid (AA) and 3-hydroxyanthranilic acid (3-OHAA), respectively. The sequence is that of Kynureninase 1 (bna5-1) from Aspergillus clavatus (strain ATCC 1007 / CBS 513.65 / DSM 816 / NCTC 3887 / NRRL 1 / QM 1276 / 107).